We begin with the raw amino-acid sequence, 200 residues long: Small ribosomal subunit protein eS8B (200 aa).

Residues methionine 1–lysine 41 are disordered. Phosphoserine occurs at positions 62 and 99. The tract at residues lysine 124–alanine 145 is disordered. Residues lysine 135–alanine 145 show a composition bias toward basic residues. Phosphoserine is present on residues serine 150, serine 154, and serine 171.

It belongs to the eukaryotic ribosomal protein eS8 family. Component of the small ribosomal subunit (SSU). Mature yeast ribosomes consist of a small (40S) and a large (60S) subunit. The 40S small subunit contains 1 molecule of ribosomal RNA (18S rRNA) and at least 33 different proteins. The large 60S subunit contains 3 rRNA molecules (25S, 5.8S and 5S rRNA) and at least 46 different proteins.

Its subcellular location is the cytoplasm. Component of the ribosome, a large ribonucleoprotein complex responsible for the synthesis of proteins in the cell. The small ribosomal subunit (SSU) binds messenger RNAs (mRNAs) and translates the encoded message by selecting cognate aminoacyl-transfer RNA (tRNA) molecules. The large subunit (LSU) contains the ribosomal catalytic site termed the peptidyl transferase center (PTC), which catalyzes the formation of peptide bonds, thereby polymerizing the amino acids delivered by tRNAs into a polypeptide chain. The nascent polypeptides leave the ribosome through a tunnel in the LSU and interact with protein factors that function in enzymatic processing, targeting, and the membrane insertion of nascent chains at the exit of the ribosomal tunnel. This Schizosaccharomyces pombe (strain 972 / ATCC 24843) (Fission yeast) protein is Small ribosomal subunit protein eS8B (rps802).